A 237-amino-acid chain; its full sequence is Terpene cyclase spyD (237 aa).

7 helical membrane-spanning segments follow: residues 17-37, 47-67, 71-91, 109-129, 138-158, 167-187, and 206-226; these read IYNVLVATAGMMWLINYIVTV, AIPLVSLCCNIAWEFTVVLVY, YLLFEIFCAMWLLVNMVIVYG, HLPLIVPLAILGCISGYYALA, IHGGGTFASFVMTVDCLCQLL, SWTMWLTRVLGSYAAIVGEFL, and WCTGMAVTMDILYACIFWYMG.

The protein belongs to the paxB family.

It localises to the membrane. It catalyses the reaction (S)-(2E,6E,10E)-epoxygeranylgeranyl-triacetate lactone = sartorypyrone F. The enzyme catalyses (S)-(2E,6E,10E)-epoxygeranylgeranyl-triacetate lactone = sartorypyrone D. It participates in secondary metabolite biosynthesis; terpenoid biosynthesis. Functionally, terpene cyclase; part of the gene cluster that mediates the biosynthesis of meroterpenoids called sartorypyrones. Within the pathway, spyD catalyzes the cyclization of epoxygeranylgeranyl-triacetate lactone. SpyD exhibits promiscuous activity, resulting in the formation of bicyclic sartorypyrone F and monocyclic sartorypyrone D. The biosynthesis of sartorypyrones begins with the production of triacetic acid lactone (TAL) by the NR-PKS spyA using one molecule of acetyl-CoA and two molecules of malonyl-CoA. The prenyltransferase spyF then conjugates geranylgeranyl pyrophosphate (GGPP) to TAL to form geranylgeranyl-triacetate lactone, for which the pathway-specific geranylgeranyl pyrophosphate synthase (GGPS) spyE is required to provide GGPP. Subsequently, geranylgeranyl-triacetate lactone is epoxidized at the terminal olein by the FAD-dependent monooxygenase spyC, followed by cyclization of the terpenoid component catalyzed by the terpene cyclase spyD to produce both the bicyclic sartorypyrone F and the monocyclic sartorypyrone D. Finally, the last step of the biosynthesis involves the acetylation of the meroterpenoids sartorypyrones D and F by the acetyltransferase SpyB to produce sartorypyrones A and G, respectively. This is Terpene cyclase spyD from Aspergillus fumigatus (strain ATCC MYA-4609 / CBS 101355 / FGSC A1100 / Af293) (Neosartorya fumigata).